The chain runs to 266 residues: Small ribosomal subunit protein uS3 (266 aa).

A KH type-2 domain is found at 39–107; the sequence is VREYLKKKLK…PVHVNIEEIR (69 aa). The interval 214 to 266 is disordered; that stretch reads PVVEEVTEDKRPRRNARPGDRRPRRDGEGGAPGARRGGPRRGAGKPEDGKTGE. 2 stretches are compositionally biased toward basic and acidic residues: residues 230-241 and 257-266; these read RPGDRRPRRDGE and GKPEDGKTGE.

Belongs to the universal ribosomal protein uS3 family. In terms of assembly, part of the 30S ribosomal subunit. Forms a tight complex with proteins S10 and S14.

Functionally, binds the lower part of the 30S subunit head. Binds mRNA in the 70S ribosome, positioning it for translation. This is Small ribosomal subunit protein uS3 from Burkholderia thailandensis (strain ATCC 700388 / DSM 13276 / CCUG 48851 / CIP 106301 / E264).